Reading from the N-terminus, the 279-residue chain is 3-methyl-2-oxobutanoate hydroxymethyltransferase (279 aa).

The Mg(2+) site is built by Asp-43 and Asp-82. Residues 43–44 (DS), Asp-82, and Lys-112 each bind 3-methyl-2-oxobutanoate. Glu-114 lines the Mg(2+) pocket. Glu-181 serves as the catalytic Proton acceptor.

The protein belongs to the PanB family. In terms of assembly, homodecamer; pentamer of dimers. Mg(2+) serves as cofactor.

Its subcellular location is the cytoplasm. It carries out the reaction 3-methyl-2-oxobutanoate + (6R)-5,10-methylene-5,6,7,8-tetrahydrofolate + H2O = 2-dehydropantoate + (6S)-5,6,7,8-tetrahydrofolate. The protein operates within cofactor biosynthesis; (R)-pantothenate biosynthesis; (R)-pantoate from 3-methyl-2-oxobutanoate: step 1/2. Its function is as follows. Catalyzes the reversible reaction in which hydroxymethyl group from 5,10-methylenetetrahydrofolate is transferred onto alpha-ketoisovalerate to form ketopantoate. The polypeptide is 3-methyl-2-oxobutanoate hydroxymethyltransferase (Bacillus pumilus (strain SAFR-032)).